Reading from the N-terminus, the 364-residue chain is Putative zinc metalloprotease all3971 (364 aa).

Residue His17 coordinates Zn(2+). Glu18 is an active-site residue. His21 serves as a coordination point for Zn(2+). 3 helical membrane passes run 92 to 114, 281 to 303, and 329 to 346; these read AIVISAGVIANLIFAYMLLLAQV, LFFFAALISINLAVINILPLPAL, and VMQTGLVLLLGLGIFLIV. In terms of domain architecture, PDZ spans 103-188; sequence LIFAYMLLLA…KSIQLTVARG (86 aa).

The protein belongs to the peptidase M50B family. Requires Zn(2+) as cofactor.

The protein resides in the cell inner membrane. In Nostoc sp. (strain PCC 7120 / SAG 25.82 / UTEX 2576), this protein is Putative zinc metalloprotease all3971.